A 249-amino-acid polypeptide reads, in one-letter code: MSISSDTSGSVPGSPIDLEPESETICHWQSCEQDLLTLDNLVHHIHNGTTSNLRLISNINSILDHIGNRRPKYTCEWDDCPRKGMVQTSRFALVAHLRSHTGEKPFICSVPECDRSFTRSDALAKHMRTVHEADTLRPSDPIPKAHPMHPQNVANAMVQSAREARAQQQMHGVGNTNEDVENWLDAASMPKTSHDMYRLQKRKLQWVKEERTMLANHLEALERKLIDARNRKEKILNEIVKQVDPSISR.

C2H2-type zinc fingers lie at residues 73–100 (YTCE…LRSH) and 106–131 (FICS…RTVH).

Component of the INO80 chromatin remodeling complex.

It localises to the nucleus. It is found in the cytoplasm. Component of the INO80 complex which remodels chromatin by shifting nucleosomes and is involved in DNA repair. The chain is INO80 complex subunit 1 (iec1) from Schizosaccharomyces pombe (strain 972 / ATCC 24843) (Fission yeast).